A 760-amino-acid polypeptide reads, in one-letter code: Protein P1 (760 aa).

The signal sequence occupies residues 1 to 33 (MASFLKPVNSQGLWLSLLLAITYLFLLPSAGQS). 4 helical membrane passes run 172-192 (LIEF…VYVA), 194-214 (AVPG…WAWP), 218-235 (ASSL…IGFL), and 240-260 (IGLI…WSLL). In terms of domain architecture, Peptidase S39 spans 318 to 515 (IPGVQIKKLR…SSSPKFTGCE (198 aa)). Active-site for protease activity residues include His366, Asp396, and Ser465. 2 disordered regions span residues 572–672 (GLWA…LSQV) and 684–760 (LTVQ…PRRN). The span at 621-643 (RAEKVRHVRRSEMTPEQKRADNL) shows a compositional bias: basic and acidic residues.

Belongs to the peptidase S39B family. In terms of processing, specific enzymatic cleavages in vivo yield mature proteins. The protease probably cleaves itself and releases the VPg protein.

The protein localises to the membrane. In terms of biological role, precursor from which the VPg molecule is probably released at the onset of the RNA synthesis. Essential for virus replication. The polypeptide is Protein P1 (Pea enation mosaic virus-1 (strain WSG) (PEMV-1)).